Consider the following 1544-residue polypeptide: Lysine-specific demethylase 5B (1544 aa).

A compositionally biased stretch (pro residues) spans 1–14 (MEPATTLPPGPRPA). Positions 1-22 (MEPATTLPPGPRPALPLGGPGP) are disordered. Residues 32–73 (CPVFEPSWEEFADPFAFIHKIRPIAEQTGICKVRPPPDWQPP) enclose the JmjN domain. Positions 97-187 (TRVKLNFLDQ…ILNPYNLFLS (91 aa)) constitute an ARID domain. Residues K148, K204, K209, K242, K274, and K278 each participate in a glycyl lysine isopeptide (Lys-Gly) (interchain with G-Cter in SUMO2) cross-link. Positions 200–228 (TSDTKDKEYKPHDIPQRQSVQPAETCPPA) are disordered. The span at 202–214 (DTKDKEYKPHDIP) shows a compositional bias: basic and acidic residues. Residues 269–297 (NEKEMKSTIKQEPTEKKDCELESEKEKPK) are disordered. A PHD-type 1 zinc finger spans residues 309-359 (LYVCLLCGSGNDEDRLLLCDGCDDSYHTFCLVPPLHDVPKGDWRCPKCLAQ). Y425 is a 2-oxoglutarate binding site. The JmjC domain maps to 453–619 (EYLDSGWNLN…LGRQCVEHYR (167 aa)). Fe cation-binding residues include H499 and E501. 2-oxoglutarate is bound by residues S507, N509, and K517. Residue H587 participates in Fe cation binding. The C5HC2 zinc-finger motif lies at 692–744 (CIKCKTTCFMSAISCSCKPGLLVCLHHVKELCSCPPYKYNLRYRYTLDDLYPM). Residue K769 forms a Glycyl lysine isopeptide (Lys-Gly) (interchain with G-Cter in SUMO2) linkage. Position 832 is an N6-acetyllysine (K832). A Phosphoserine modification is found at S986. Residues 1176–1224 (MKVCLCQKTPATPMIQCELCRDAFHTSCVAAPSISQSSRIWLCPHCRRS) form a PHD-type 2 zinc finger. The segment covering 1297-1314 (QASATDKVSQPPGTTSFS) has biased composition (polar residues). The segment at 1297–1318 (QASATDKVSQPPGTTSFSLPDD) is disordered. Residue S1328 is modified to Phosphoserine. Positions 1374 to 1388 (PSSVQQADRSSPVRS) are enriched in polar residues. Positions 1374 to 1447 (PSSVQQADRS…IKLSHPKDMD (74 aa)) are disordered. Over residues 1389 to 1427 (SSEKNDCLRGKRDAINSPERKLKRRPEREGLPSERWDRV) the composition is skewed to basic and acidic residues. Residues 1428-1441 (KHMRTPQKKKIKLS) show a composition bias toward basic residues. K1450 participates in a covalent cross-link: Glycyl lysine isopeptide (Lys-Gly) (interchain with G-Cter in SUMO2). Phosphoserine is present on S1456. A PHD-type 3 zinc finger spans residues 1484 to 1538 (DAICPAVSCLQPEGDEVDWVQCDGSCNQWFHQVCVGVSPEMAEKEDYICVRCTGK).

This sequence belongs to the JARID1 histone demethylase family. As to quaternary structure, interacts with FOXG1B, PAX9, MYC, MYCN and RB1. Interacts with HDAC1, HDAC4, HDAC5 and HDAC7. Interacts (via PHD-type 1 zinc finger) with histone H3 unmodified at 'Lys-4'; the interaction is inhibited when histone H3 is methylated at 'Arg-2' or 'Lys-4'. The cofactor is Fe(2+). Present at highest levels in testis, where it is enriched in spermatogonia and pachytene cells (at protein level).

Its subcellular location is the nucleus. The enzyme catalyses N(6),N(6),N(6)-trimethyl-L-lysyl(4)-[histone H3] + 3 2-oxoglutarate + 3 O2 = L-lysyl(4)-[histone H3] + 3 formaldehyde + 3 succinate + 3 CO2. In terms of biological role, histone demethylase that demethylates 'Lys-4' of histone H3, thereby playing a central role in histone code. Does not demethylate histone H3 'Lys-9' or H3 'Lys-27'. Demethylates trimethylated, dimethylated and monomethylated H3 'Lys-4'. Acts as a transcriptional corepressor for FOXG1B and PAX9. Represses the CLOCK-BMAL1 heterodimer-mediated transcriptional activation of the core clock component PER2. The polypeptide is Lysine-specific demethylase 5B (Kdm5b) (Mus musculus (Mouse)).